The chain runs to 131 residues: ATP synthase epsilon chain (131 aa).

It belongs to the ATPase epsilon chain family. As to quaternary structure, F-type ATPases have 2 components, CF(1) - the catalytic core - and CF(0) - the membrane proton channel. CF(1) has five subunits: alpha(3), beta(3), gamma(1), delta(1), epsilon(1). CF(0) has three main subunits: a, b and c.

It localises to the cell membrane. Produces ATP from ADP in the presence of a proton gradient across the membrane. This Bacillus pumilus (strain SAFR-032) protein is ATP synthase epsilon chain.